A 325-amino-acid chain; its full sequence is Protein FAM50B (325 aa).

An N-acetylalanine modification is found at Ala-2. Disordered stretches follow at residues Gln-92–Arg-111 and Arg-137–Glu-160.

Belongs to the FAM50 family. As to expression, widely expressed. Mostly abundant in testis and adult and fetal brain.

This is Protein FAM50B (FAM50B) from Homo sapiens (Human).